The following is a 1049-amino-acid chain: Probable ATP-dependent permease (1049 aa).

An N-terminal signal peptide occupies residues 1-25 (MGSHRRYLYYSILSFLLLSCSVVLA). Over 26–324 (KQDKTPFFEG…KDPTVSWQGK (299 aa)) the chain is Lumenal. Residues asparagine 50, asparagine 114, asparagine 165, and asparagine 221 are each glycosylated (N-linked (GlcNAc...) asparagine). The helical transmembrane segment at 325–345 (LVLALTAVMVLALFTFATFYI) threads the bilayer. Residues 346 to 463 (SKSPLFRNGL…ISMDRKSFSK (118 aa)) are Cytoplasmic-facing. An ABC transporter domain is found at 384-631 (LSFENITYSV…LRNEGYICPD (248 aa)). ATP is bound at residue 423 to 430 (GGSGAGKT). A helical membrane pass occupies residues 464 to 481 (IIGFVDQDDFLLPTLTVF). Residues 482–793 (ETVLNSALLR…SFKNMYRNPK (312 aa)) lie on the Lumenal side of the membrane. Residues serine 659 and serine 702 each carry the phosphoserine modification. The ABC transmembrane type-2 domain occupies 793-1044 (KLLLGNYLLT…IMGYLALKWI (252 aa)). A helical transmembrane segment spans residues 794–814 (LLLGNYLLTILLSLFLGTLYY). Residues 815–828 (NVSNDISGFQNRMG) lie on the Cytoplasmic side of the membrane. The helical transmembrane segment at 829-849 (LFFFILTYFGFVTFTGLSSFA) threads the bilayer. The Lumenal segment spans residues 850–877 (LERIIFIKERSNNYYSPLAYYISKIMSE). Residues 878 to 898 (VVPLRVVPPILLSLIVYPMTG) form a helical membrane-spanning segment. At 899-909 (LNMKDNAFFKC) the chain is on the cytoplasmic side. Residues 910-930 (IGILILFNLGISLEILTIGII) traverse the membrane as a helical segment. Residues 931–937 (FEDLNNS) are Lumenal-facing. The N-linked (GlcNAc...) asparagine glycan is linked to asparagine 935. A helical transmembrane segment spans residues 938-958 (IILSVLVLLGSLLFSGLFINT). The Cytoplasmic portion of the chain corresponds to 959–1000 (KNITNVAFKYLKNFSVFYYAYESLLINEVKTLMLKERKYGLN). Residues 1001-1021 (IEVPGATILSTFGFVVQNLVF) traverse the membrane as a helical segment. At 1022-1024 (DIK) the chain is on the lumenal side. Residues 1025 to 1045 (ILALFNVVFLIMGYLALKWIV) form a helical membrane-spanning segment. The Cytoplasmic segment spans residues 1046–1049 (VEQK).

The protein belongs to the ABC transporter superfamily. ABCG family. Eye pigment precursor importer (TC 3.A.1.204) subfamily.

The protein localises to the endoplasmic reticulum membrane. This is Probable ATP-dependent permease (ADP1) from Saccharomyces cerevisiae (strain ATCC 204508 / S288c) (Baker's yeast).